We begin with the raw amino-acid sequence, 336 residues long: Ornithine carbamoyltransferase, catabolic (336 aa).

Carbamoyl phosphate contacts are provided by residues 62–65 (STRT), Gln-89, Arg-113, and 140–143 (HPTQ). L-ornithine contacts are provided by residues Asn-172, Asp-236, and 240-241 (SM). Residues 277 to 278 (CL) and Arg-322 contribute to the carbamoyl phosphate site.

This sequence belongs to the aspartate/ornithine carbamoyltransferase superfamily. OTCase family.

It localises to the cytoplasm. The catalysed reaction is carbamoyl phosphate + L-ornithine = L-citrulline + phosphate + H(+). The protein operates within amino-acid degradation; L-arginine degradation via ADI pathway; carbamoyl phosphate from L-arginine: step 2/2. Functionally, reversibly catalyzes the transfer of the carbamoyl group from carbamoyl phosphate (CP) to the N(epsilon) atom of ornithine (ORN) to produce L-citrulline. The polypeptide is Ornithine carbamoyltransferase, catabolic (Staphylococcus aureus (strain MRSA252)).